A 160-amino-acid polypeptide reads, in one-letter code: Monooxygenase AacuO (160 aa).

It belongs to the avfA family.

The protein operates within secondary metabolite biosynthesis. Monooxygenase; part of the gene cluster that mediates the biosynthesis of the tetrahydroxanthone dimer secalonic acid D. The pathway begins with the synthesis of atrochrysone thioester by the polyketide synthase AacuL. The atrochrysone carboxyl ACP thioesterase AacuM then breaks the thioester bond and releases the atrochrysone carboxylic acid from AacuL. Atrochrysone carboxylic acid is decarboxylated by the decarboxylase AacuI, and oxidized by the anthrone oxygenase AacuG to yield emodin. Emodin is then reduced to emodin hydroquinone by a yet unidentified oxidoreductase. A-ring reduction by the short chain dehydrogenase AacuN, dehydration by the scytalone dehydratase-like protein AacuK and probable spontaneous re-oxidation, results in overall deoxygenation to chrysophanol. Baeyer-Villiger oxidation by the Baeyer-Villiger monooxygenase (BVMO) AacuH then yields monodictyphenone. Monodictyphenone is transformed into compounds with the tetrahydroxanthone skeleton via methylesterification by the methyltransferase AacuQ, followed by the action of the flavin-dependent monooxygenase AacuC, the isomerase AacuP, and the short chain dehydrogenase/reductase AacuF or AacuD. AacuF and AacuD should accept the same compound as a substrate but perform the ketoreduction with a different stereoselectivity, thus yielding blennolides B and A, respectively. In the final step of the biosynthesis, the cytochrome P450 monooxygenase AacuE accepts blennolide B and/or blennolide A to conduct the dimerization reaction to furnish the tetrahydroxanthone dimers, secalonic acids D, B, and F. In Aspergillus aculeatus (strain ATCC 16872 / CBS 172.66 / WB 5094), this protein is Monooxygenase AacuO.